The sequence spans 61 residues: FTCFTTPSDTSETCPIGNNICYEKRWSGHGMQIEKGCVASCPSFESHYKFLLCCRIENCNQ.

Cystine bridges form between Cys-3–Cys-21, Cys-14–Cys-37, Cys-41–Cys-53, and Cys-54–Cys-59.

It belongs to the three-finger toxin family. Short-chain subfamily. Orphan group VI sub-subfamily. In terms of tissue distribution, expressed by the venom gland.

It is found in the secreted. The sequence is that of Weak toxin CM-1c from Hemachatus haemachatus (Rinkhals).